Consider the following 101-residue polypeptide: Small ribosomal subunit protein uS10 (101 aa).

It belongs to the universal ribosomal protein uS10 family. In terms of assembly, part of the 30S ribosomal subunit.

Its function is as follows. Involved in the binding of tRNA to the ribosomes. This is Small ribosomal subunit protein uS10 from Corynebacterium jeikeium (strain K411).